Reading from the N-terminus, the 561-residue chain is Transmembrane protein 209 (561 aa).

A phosphoserine mark is found at Ser9 and Ser11. Residues Val28 to Thr48 traverse the membrane as a helical segment. Asn57 carries an N-linked (GlcNAc...) asparagine glycan. Residues Tyr60–Phe80 form a helical membrane-spanning segment. Residue Ser98 is modified to Phosphoserine. Disordered regions lie at residues Leu120–Thr156 and Ser196–Glu233. Positions Ser138–Pro152 are enriched in low complexity. Residues Ser201 and Ser248 each carry the phosphoserine modification. A disordered region spans residues Glu250 to Pro270. Residues Ser260–Pro270 are compositionally biased toward low complexity. N-linked (GlcNAc...) asparagine glycosylation is present at Asn274. Residue Ser278 is modified to Phosphoserine.

In terms of assembly, interacts with NUP205.

It localises to the membrane. The protein resides in the nucleus envelope. The protein localises to the golgi apparatus. It is found in the cytoplasm. Nuclear envelope protein which in association with NUP205, may be involved in nuclear transport of various nuclear proteins in addition to MYC. In Rattus norvegicus (Rat), this protein is Transmembrane protein 209 (Tmem209).